Reading from the N-terminus, the 236-residue chain is Purine nucleoside phosphorylase DeoD-type (236 aa).

His5 provides a ligand contact to a purine D-ribonucleoside. Residues Gly21, Arg25, Arg44, and 88–91 (RVGT) contribute to the phosphate site. A purine D-ribonucleoside contacts are provided by residues 180-182 (EME) and 204-205 (SD). Asp205 acts as the Proton donor in catalysis.

This sequence belongs to the PNP/UDP phosphorylase family. Homohexamer; trimer of homodimers.

It carries out the reaction a purine D-ribonucleoside + phosphate = a purine nucleobase + alpha-D-ribose 1-phosphate. It catalyses the reaction a purine 2'-deoxy-D-ribonucleoside + phosphate = a purine nucleobase + 2-deoxy-alpha-D-ribose 1-phosphate. In terms of biological role, catalyzes the reversible phosphorolytic breakdown of the N-glycosidic bond in the beta-(deoxy)ribonucleoside molecules, with the formation of the corresponding free purine bases and pentose-1-phosphate. The protein is Purine nucleoside phosphorylase DeoD-type of Shewanella denitrificans (strain OS217 / ATCC BAA-1090 / DSM 15013).